Reading from the N-terminus, the 412-residue chain is 1-deoxy-D-xylulose 5-phosphate reductoisomerase (412 aa).

NADPH contacts are provided by Thr10, Gly11, Ser12, Ile13, Gly36, Lys37, Asn38, and Asn130. Lys131 contributes to the 1-deoxy-D-xylulose 5-phosphate binding site. Glu132 serves as a coordination point for NADPH. Asp156 contributes to the Mn(2+) binding site. 1-deoxy-D-xylulose 5-phosphate-binding residues include Ser157, Glu158, Ser194, and His217. Glu158 contributes to the Mn(2+) binding site. Position 223 (Gly223) interacts with NADPH. 4 residues coordinate 1-deoxy-D-xylulose 5-phosphate: Ser230, Asn235, Lys236, and Glu239. Glu239 contacts Mn(2+).

It belongs to the DXR family. The cofactor is Mg(2+). Requires Mn(2+) as cofactor.

It catalyses the reaction 2-C-methyl-D-erythritol 4-phosphate + NADP(+) = 1-deoxy-D-xylulose 5-phosphate + NADPH + H(+). Its pathway is isoprenoid biosynthesis; isopentenyl diphosphate biosynthesis via DXP pathway; isopentenyl diphosphate from 1-deoxy-D-xylulose 5-phosphate: step 1/6. Functionally, catalyzes the NADPH-dependent rearrangement and reduction of 1-deoxy-D-xylulose-5-phosphate (DXP) to 2-C-methyl-D-erythritol 4-phosphate (MEP). The protein is 1-deoxy-D-xylulose 5-phosphate reductoisomerase of Prochlorococcus marinus (strain NATL2A).